The following is a 155-amino-acid chain: MRLRLIAVGSRMPKWVEEGWHEYAKRMPSELALELVEIPLNTRGKNADVARFIRQEGEAMLAKVQPGERIVTLEVQGKPWSTEQLAVELDRWRLDARTVNLMVGGPEGLAPEVCARSEQRWSLSPLTLPHPLVRILIGEQMYRAWTVLSGHPYHK.

S-adenosyl-L-methionine contacts are provided by residues L73, G104, and 123–128 (LSPLTL).

This sequence belongs to the RNA methyltransferase RlmH family. Homodimer.

It localises to the cytoplasm. The enzyme catalyses pseudouridine(1915) in 23S rRNA + S-adenosyl-L-methionine = N(3)-methylpseudouridine(1915) in 23S rRNA + S-adenosyl-L-homocysteine + H(+). Specifically methylates the pseudouridine at position 1915 (m3Psi1915) in 23S rRNA. This is Ribosomal RNA large subunit methyltransferase H from Pseudomonas syringae pv. tomato (strain ATCC BAA-871 / DC3000).